The chain runs to 229 residues: Heptaprenylglyceryl phosphate synthase (229 aa).

K12 contributes to the sn-glycerol 1-phosphate binding site. Mg(2+) is bound by residues D14 and S40. Residues 159 to 164, G189, and 209 to 210 each bind sn-glycerol 1-phosphate; these read YLEYSG and GN.

The protein belongs to the GGGP/HepGP synthase family. Group I subfamily. As to quaternary structure, homodimer. Requires Mg(2+) as cofactor.

The catalysed reaction is sn-glycerol 1-phosphate + all-trans-heptaprenyl diphosphate = 3-heptaprenyl-sn-glycero-1-phosphate + diphosphate. It functions in the pathway membrane lipid metabolism; glycerophospholipid metabolism. Functionally, prenyltransferase that catalyzes in vivo the transfer of the heptaprenyl moiety of heptaprenyl pyrophosphate (HepPP; 35 carbon atoms) to the C3 hydroxyl of sn-glycerol-1-phosphate (G1P), producing heptaprenylglyceryl phosphate (HepGP). This reaction is an ether-bond-formation step in the biosynthesis of archaea-type G1P-based membrane lipids found in Bacillales. This Bacillus anthracis (strain A0248) protein is Heptaprenylglyceryl phosphate synthase.